Reading from the N-terminus, the 646-residue chain is Peptidylprolyl isomerase domain and WD repeat-containing protein 1 (646 aa).

The disordered stretch occupies residues 1 to 30 (MAAESGSDFQQRRRRRRDPEEPEKTELSER). A2 carries the post-translational modification N-acetylalanine. The segment covering 17–30 (RDPEEPEKTELSER) has biased composition (basic and acidic residues). WD repeat units lie at residues 80-118 (ASMYERSYMHRDVITHVVCTKTDFIITASHDGHVKFWKK), 124-162 (EFVKHFRSHLGVIESIAVSSEGALFCSVGDDKAMKVFDV), 168-208 (INML…IYDG), 213-252 (QPLHIFDKLHTSPLTQIRLNPVYKAVVSSDKSGMIEYWTG), 271-309 (TDLYEFAKCKAYPTSVCFSPDGKKIATIGSDRKVRIFRF), 345-386 (AVER…VETN), and 401-453 (MQLA…MFTK). Residues 455–478 (EPEDTKSADSDRDVFNEKPSKEEV) show a composition bias toward basic and acidic residues. The segment at 455-490 (EPEDTKSADSDRDVFNEKPSKEEVMAATQAEGPKRV) is disordered. The region spanning 490–645 (VSDSAIIHTS…EDVSIINITV (156 aa)) is the PPIase cyclophilin-type domain.

It belongs to the cyclophilin-type PPIase family. PPIL1 subfamily. As to quaternary structure, identified in the spliceosome C complex.

It is found in the nucleus. It carries out the reaction [protein]-peptidylproline (omega=180) = [protein]-peptidylproline (omega=0). Its activity is regulated as follows. Inhibited by cyclosporin A (CsA). PPIase that catalyzes the cis-trans isomerization of proline imidic peptide bonds in oligopeptides and may therefore assist protein folding. May be involved in pre-mRNA splicing. The chain is Peptidylprolyl isomerase domain and WD repeat-containing protein 1 from Homo sapiens (Human).